An 82-amino-acid polypeptide reads, in one-letter code: Acyl carrier protein (82 aa).

The 76-residue stretch at 2–77 (DNVADRVKKV…QAIDYVSAHI (76 aa)) folds into the Carrier domain. Position 37 is an O-(pantetheine 4'-phosphoryl)serine (S37).

It belongs to the acyl carrier protein (ACP) family. Post-translationally, 4'-phosphopantetheine is transferred from CoA to a specific serine of apo-ACP by AcpS. This modification is essential for activity because fatty acids are bound in thioester linkage to the sulfhydryl of the prosthetic group.

It localises to the cytoplasm. It participates in lipid metabolism; fatty acid biosynthesis. In terms of biological role, carrier of the growing fatty acid chain in fatty acid biosynthesis. The chain is Acyl carrier protein from Acidithiobacillus ferrooxidans (strain ATCC 23270 / DSM 14882 / CIP 104768 / NCIMB 8455) (Ferrobacillus ferrooxidans (strain ATCC 23270)).